Reading from the N-terminus, the 198-residue chain is Phosphoheptose isomerase (198 aa).

The region spanning 36–195 (AIEVYQNGNK…EEAIFRNKFV (160 aa)) is the SIS domain. 51–53 (NGG) contacts substrate. Histidine 60 and glutamate 64 together coordinate Zn(2+). Substrate is bound by residues glutamate 64, 93–94 (ND), 119–121 (STS), serine 124, and glutamine 171. Glutamine 171 and histidine 179 together coordinate Zn(2+).

This sequence belongs to the SIS family. GmhA subfamily. The cofactor is Zn(2+).

It is found in the cytoplasm. The enzyme catalyses 2 D-sedoheptulose 7-phosphate = D-glycero-alpha-D-manno-heptose 7-phosphate + D-glycero-beta-D-manno-heptose 7-phosphate. The protein operates within carbohydrate biosynthesis; D-glycero-D-manno-heptose 7-phosphate biosynthesis; D-glycero-alpha-D-manno-heptose 7-phosphate and D-glycero-beta-D-manno-heptose 7-phosphate from sedoheptulose 7-phosphate: step 1/1. Its pathway is cell surface structure biogenesis; S-layer biogenesis. Functionally, catalyzes the isomerization of sedoheptulose 7-phosphate in D-glycero-D-manno-heptose 7-phosphate. The sequence is that of Phosphoheptose isomerase from Aneurinibacillus thermoaerophilus.